The chain runs to 179 residues: Large ribosomal subunit protein uL5 (179 aa).

The protein belongs to the universal ribosomal protein uL5 family. In terms of assembly, part of the 50S ribosomal subunit; part of the 5S rRNA/L5/L18/L25 subcomplex. Contacts the 5S rRNA and the P site tRNA. Forms a bridge to the 30S subunit in the 70S ribosome.

Its function is as follows. This is one of the proteins that bind and probably mediate the attachment of the 5S RNA into the large ribosomal subunit, where it forms part of the central protuberance. In the 70S ribosome it contacts protein S13 of the 30S subunit (bridge B1b), connecting the 2 subunits; this bridge is implicated in subunit movement. Contacts the P site tRNA; the 5S rRNA and some of its associated proteins might help stabilize positioning of ribosome-bound tRNAs. The protein is Large ribosomal subunit protein uL5 of Delftia acidovorans (strain DSM 14801 / SPH-1).